The chain runs to 98 residues: Co-chaperonin GroES 4 (98 aa).

It belongs to the GroES chaperonin family. As to quaternary structure, heptamer of 7 subunits arranged in a ring. Interacts with the chaperonin GroEL.

The protein localises to the cytoplasm. Functionally, together with the chaperonin GroEL, plays an essential role in assisting protein folding. The GroEL-GroES system forms a nano-cage that allows encapsulation of the non-native substrate proteins and provides a physical environment optimized to promote and accelerate protein folding. GroES binds to the apical surface of the GroEL ring, thereby capping the opening of the GroEL channel. This is Co-chaperonin GroES 4 from Mesorhizobium japonicum (strain LMG 29417 / CECT 9101 / MAFF 303099) (Mesorhizobium loti (strain MAFF 303099)).